The following is a 259-amino-acid chain: O-antigen export system permease protein RfbA (259 aa).

6 consecutive transmembrane segments (helical) span residues 33 to 53 (LGYL…YFIF), 73 to 95 (FPWQ…NAQI), 111 to 131 (VMME…FLFV), 142 to 162 (WGIP…SIIF), 176 to 196 (VSLG…SDMI), and 228 to 248 (EYIS…LSIF). The ABC transmembrane type-2 domain maps to 33–251 (LGYLWSVANP…VVGLSIFNKL (219 aa)).

Belongs to the ABC-2 integral membrane protein family.

Its subcellular location is the cell inner membrane. May form an ATP-driven O-antigen export apparatus, in association with RfbB. This Klebsiella pneumoniae protein is O-antigen export system permease protein RfbA (rfbA).